A 194-amino-acid polypeptide reads, in one-letter code: Large ribosomal subunit protein eL15 (194 aa).

A disordered region spans residues 164–194 (SAGKKGRGLRNKGKGAEKIRPSIRANEGKGK). A compositionally biased stretch (basic residues) spans 167–176 (KKGRGLRNKG). Residues 177–194 (KGAEKIRPSIRANEGKGK) are compositionally biased toward basic and acidic residues.

It belongs to the eukaryotic ribosomal protein eL15 family.

The polypeptide is Large ribosomal subunit protein eL15 (rpl15e) (Pyrococcus abyssi (strain GE5 / Orsay)).